The following is a 472-amino-acid chain: Glutamate--tRNA ligase (472 aa).

The short motif at 7–17 (PSPTGFLHVGG) is the 'HIGH' region element. Zn(2+) is bound by residues C96, C98, C123, and H125. The span at 112-129 (ARKEKPRYDGRCRHRSEP) shows a compositional bias: basic and acidic residues. Residues 112 to 134 (ARKEKPRYDGRCRHRSEPPSDQP) are disordered. The 'KMSKS' region signature appears at 234–238 (KLSKR). K237 is a binding site for ATP.

It belongs to the class-I aminoacyl-tRNA synthetase family. Glutamate--tRNA ligase type 1 subfamily. Monomer. Requires Zn(2+) as cofactor.

The protein localises to the cytoplasm. The catalysed reaction is tRNA(Glu) + L-glutamate + ATP = L-glutamyl-tRNA(Glu) + AMP + diphosphate. Its function is as follows. Catalyzes the attachment of glutamate to tRNA(Glu) in a two-step reaction: glutamate is first activated by ATP to form Glu-AMP and then transferred to the acceptor end of tRNA(Glu). The sequence is that of Glutamate--tRNA ligase from Magnetococcus marinus (strain ATCC BAA-1437 / JCM 17883 / MC-1).